The primary structure comprises 228 residues: Mediator of RNA polymerase II transcription subunit 7-A (228 aa).

The protein belongs to the Mediator complex subunit 7 family. Component of the Mediator complex.

Its subcellular location is the nucleus. Its function is as follows. Component of the Mediator complex, a coactivator involved in the regulated transcription of nearly all RNA polymerase II-dependent genes. Mediator functions as a bridge to convey information from gene-specific regulatory proteins to the basal RNA polymerase II transcription machinery. Mediator is recruited to promoters by direct interactions with regulatory proteins and serves as a scaffold for the assembly of a functional preinitiation complex with RNA polymerase II and the general transcription factors. This is Mediator of RNA polymerase II transcription subunit 7-A (med7-a) from Xenopus laevis (African clawed frog).